Reading from the N-terminus, the 410-residue chain is Homeobox protein Hox-A3a (410 aa).

Residues 79–126 (VTDTSDNKQPPTAPSGPSSPSSLNQIPNIDSAAKNPVHVSPTPSTRKH) are disordered. Residues 127-132 (IFPWMK) carry the Antp-type hexapeptide motif. The homeobox DNA-binding region spans 163 to 222 (SKRARTAYTSAQLVELEKEFHFNRYLCRPRRVEMANLLNLTERQIKIWFQNRRMKYKKDQ). The interval 222–249 (QKGLGMMPSPGAQSPHSPVSLSSGGGGG) is disordered.

It belongs to the Antp homeobox family.

The protein localises to the nucleus. Functionally, sequence-specific transcription factor which is part of a developmental regulatory system that provides cells with specific positional identities on the anterior-posterior axis. The sequence is that of Homeobox protein Hox-A3a (hoxa3a) from Danio rerio (Zebrafish).